We begin with the raw amino-acid sequence, 668 residues long: RNA-binding protein PIN4 (668 aa).

The interval 1–77 (METSSFENAP…NLNNAPTNGA (77 aa)) is disordered. Over residues 8-23 (NAPPAAINDAQDNNIN) the composition is skewed to low complexity. Residues 24-36 (TETNDQETNQQSI) show a composition bias toward polar residues. A compositionally biased stretch (basic and acidic residues) spans 37–46 (ETRDAIDKEN). The segment covering 47–74 (GVQTETGENSAKNAEQNVSSTNLNNAPT) has biased composition (polar residues). Ser56 is modified (phosphoserine). Residues 85-163 (NAIVIKNIPF…RKLKVEYKKM (79 aa)) enclose the RRM domain. Basic and acidic residues predominate over residues 168–188 (ERERIEREKREKRGQLEEQHR). A disordered region spans residues 168-214 (ERERIEREKREKRGQLEEQHRSSSNLSLDSLSKMSGSGNNNTSNNQL). Ser189, Ser191, Ser194, and Ser197 each carry phosphoserine. Over residues 189-212 (SSSNLSLDSLSKMSGSGNNNTSNN) the composition is skewed to low complexity. A Phosphothreonine modification is found at Thr305. Disordered stretches follow at residues 374-398 (QQQG…NRSQ) and 420-570 (VNNS…QRVP). The residue at position 393 (Ser393) is a Phosphoserine. Residues 420–449 (VNNSSNSNTINSNNGNGNNVIINNNSASST) are compositionally biased toward low complexity. Residues 450–478 (PKISSQGQFSMQPTLTSPKMNIHHSSQYN) are compositionally biased toward polar residues. A Phosphoserine modification is found at Ser466. The segment covering 479 to 508 (SADQPQQPQPQTQQNVQSAAQQQQSFLRQQ) has biased composition (low complexity). Residues 509 to 551 (ATLTPSSRIPSGYSANHYQINSVNPLLRNSQISPPNSQIPINS) show a composition bias toward polar residues. Ser541 is subject to Phosphoserine. Residues 552 to 567 (QTLSQAQPPAQSQTQQ) are compositionally biased toward low complexity. Residues Ser636, Ser638, Ser640, Ser653, and Ser655 each carry the phosphoserine modification.

Interacts with RAD53. Post-translationally, hyperphosphorylated in response to DNA damage by MEC1.

The protein resides in the cytoplasm. Involved in normal G2/M phase transition of the mitotic cell cycle. In association with RAD53, also involved in checkpoint control in response to DNA damage. The chain is RNA-binding protein PIN4 (PIN4) from Saccharomyces cerevisiae (strain ATCC 204508 / S288c) (Baker's yeast).